The following is a 338-amino-acid chain: Ketol-acid reductoisomerase (NADP(+)) (338 aa).

The KARI N-terminal Rossmann domain maps to 3–183 (IDVFYDDDAD…GGARAGVIPT (181 aa)). Residues 26–29 (YGSQ), Arg49, Ser52, Ser54, and 84–87 (DTSQ) contribute to the NADP(+) site. Residue His109 is part of the active site. Gly135 provides a ligand contact to NADP(+). Positions 184 to 329 (TFEAETVTDL…AKLRDLMSWV (146 aa)) constitute a KARI C-terminal knotted domain. The Mg(2+) site is built by Asp192, Glu196, Glu228, and Glu232. Position 253 (Ser253) interacts with substrate.

Belongs to the ketol-acid reductoisomerase family. The cofactor is Mg(2+).

The enzyme catalyses (2R)-2,3-dihydroxy-3-methylbutanoate + NADP(+) = (2S)-2-acetolactate + NADPH + H(+). The catalysed reaction is (2R,3R)-2,3-dihydroxy-3-methylpentanoate + NADP(+) = (S)-2-ethyl-2-hydroxy-3-oxobutanoate + NADPH + H(+). The protein operates within amino-acid biosynthesis; L-isoleucine biosynthesis; L-isoleucine from 2-oxobutanoate: step 2/4. It functions in the pathway amino-acid biosynthesis; L-valine biosynthesis; L-valine from pyruvate: step 2/4. Functionally, involved in the biosynthesis of branched-chain amino acids (BCAA). Catalyzes an alkyl-migration followed by a ketol-acid reduction of (S)-2-acetolactate (S2AL) to yield (R)-2,3-dihydroxy-isovalerate. In the isomerase reaction, S2AL is rearranged via a Mg-dependent methyl migration to produce 3-hydroxy-3-methyl-2-ketobutyrate (HMKB). In the reductase reaction, this 2-ketoacid undergoes a metal-dependent reduction by NADPH to yield (R)-2,3-dihydroxy-isovalerate. This chain is Ketol-acid reductoisomerase (NADP(+)), found in Corynebacterium jeikeium (strain K411).